We begin with the raw amino-acid sequence, 151 residues long: Deoxyuridine 5'-triphosphate nucleotidohydrolase (151 aa).

Residues 70–72, Asn-83, 87–89, and Met-97 contribute to the substrate site; these read RSG and LID.

It belongs to the dUTPase family. Mg(2+) is required as a cofactor.

The enzyme catalyses dUTP + H2O = dUMP + diphosphate + H(+). It participates in pyrimidine metabolism; dUMP biosynthesis; dUMP from dCTP (dUTP route): step 2/2. This enzyme is involved in nucleotide metabolism: it produces dUMP, the immediate precursor of thymidine nucleotides and it decreases the intracellular concentration of dUTP so that uracil cannot be incorporated into DNA. The sequence is that of Deoxyuridine 5'-triphosphate nucleotidohydrolase from Pseudomonas syringae pv. tomato (strain ATCC BAA-871 / DC3000).